A 549-amino-acid polypeptide reads, in one-letter code: CTP synthase (549 aa).

Residues 1–267 (MAKFVFITGG…CREVLDVLQL (267 aa)) form an amidoligase domain region. Ser13 lines the CTP pocket. A UTP-binding site is contributed by Ser13. Residues 14–19 (SIGKGI) and Asp71 each bind ATP. Mg(2+)-binding residues include Asp71 and Glu141. Residues 148–150 (DIE), 188–193 (KTKPTQ), and Lys224 each bind CTP. Residues 188–193 (KTKPTQ) and Lys224 contribute to the UTP site. A Glutamine amidotransferase type-1 domain is found at 292 to 534 (KVALVGKYVQ…IEAAQQRLPD (243 aa)). Gly354 lines the L-glutamine pocket. Cys381 acts as the Nucleophile; for glutamine hydrolysis in catalysis. Residues 382–385 (LGMQ), Glu405, and Arg462 each bind L-glutamine. Residues His507 and Glu509 contribute to the active site.

This sequence belongs to the CTP synthase family. Homotetramer.

It carries out the reaction UTP + L-glutamine + ATP + H2O = CTP + L-glutamate + ADP + phosphate + 2 H(+). The catalysed reaction is L-glutamine + H2O = L-glutamate + NH4(+). The enzyme catalyses UTP + NH4(+) + ATP = CTP + ADP + phosphate + 2 H(+). The protein operates within pyrimidine metabolism; CTP biosynthesis via de novo pathway; CTP from UDP: step 2/2. With respect to regulation, allosterically activated by GTP, when glutamine is the substrate; GTP has no effect on the reaction when ammonia is the substrate. The allosteric effector GTP functions by stabilizing the protein conformation that binds the tetrahedral intermediate(s) formed during glutamine hydrolysis. Inhibited by the product CTP, via allosteric rather than competitive inhibition. In terms of biological role, catalyzes the ATP-dependent amination of UTP to CTP with either L-glutamine or ammonia as the source of nitrogen. Regulates intracellular CTP levels through interactions with the four ribonucleotide triphosphates. The sequence is that of CTP synthase from Synechococcus sp. (strain CC9902).